A 157-amino-acid polypeptide reads, in one-letter code: Large ribosomal subunit protein uL11 (157 aa).

It belongs to the universal ribosomal protein uL11 family.

This protein binds directly to 26S ribosomal RNA. This chain is Large ribosomal subunit protein uL11 (RPL12), found in Chlamydomonas reinhardtii (Chlamydomonas smithii).